We begin with the raw amino-acid sequence, 222 residues long: MKRTKSIHHASFRKSWSARHLTPVALAVTAVFMLAGCEKSDETVSLYQNADDCSAANPGKNAECTTAFNNALKEAERTAPKYATREDCVAEFGEGQCQQAPAQAGMAPENQAQAQSSGSFWMPLMAGYMMGRMMGGGAGFAQQPLFSSKNPASPAYGKYTDASGKNYGAAQPGRTMTVPKTAMAPKPATTTTVTRGGFGESVAKQSTMQRSATGTSNRSMGG.

Over residues 177-194 (TVPKTAMAPKPATTTTVT) the composition is skewed to low complexity. Residues 177–222 (TVPKTAMAPKPATTTTVTRGGFGESVAKQSTMQRSATGTSNRSMGG) are disordered. Residues 203–222 (AKQSTMQRSATGTSNRSMGG) show a composition bias toward polar residues.

Belongs to the UPF0441 family.

The polypeptide is UPF0441 protein CKO_04429 (Citrobacter koseri (strain ATCC BAA-895 / CDC 4225-83 / SGSC4696)).